The sequence spans 312 residues: Methionyl-tRNA formyltransferase (312 aa).

Position 117 to 120 (117 to 120 (SLLP)) interacts with (6S)-5,6,7,8-tetrahydrofolate.

Belongs to the Fmt family.

The enzyme catalyses L-methionyl-tRNA(fMet) + (6R)-10-formyltetrahydrofolate = N-formyl-L-methionyl-tRNA(fMet) + (6S)-5,6,7,8-tetrahydrofolate + H(+). Functionally, attaches a formyl group to the free amino group of methionyl-tRNA(fMet). The formyl group appears to play a dual role in the initiator identity of N-formylmethionyl-tRNA by promoting its recognition by IF2 and preventing the misappropriation of this tRNA by the elongation apparatus. The chain is Methionyl-tRNA formyltransferase from Bordetella parapertussis (strain 12822 / ATCC BAA-587 / NCTC 13253).